Reading from the N-terminus, the 171-residue chain is Dual specificity protein phosphatase OPG106 (171 aa).

The Tyrosine-protein phosphatase domain maps to 23-171; sequence SPTIMTRVTN…IIEKYVIDKN (149 aa). Cysteine 110 acts as the Phosphocysteine intermediate in catalysis.

Belongs to the protein-tyrosine phosphatase family. Non-receptor class dual specificity subfamily. In terms of assembly, homodimer.

The protein resides in the virion. The protein localises to the host cytoplasm. It carries out the reaction O-phospho-L-tyrosyl-[protein] + H2O = L-tyrosyl-[protein] + phosphate. The enzyme catalyses O-phospho-L-seryl-[protein] + H2O = L-seryl-[protein] + phosphate. Inhibited by NSC-62914, NSC-28086, NSC-105687, NSC-23173, 540211 and 217691 with IC50 values of 48, 51, 212, 342, 4 and 11 uM, respectively. Serine/tyrosine phosphatase which down-regulates cellular antiviral response by dephosphorylating activated host STAT1 and blocking interferon (IFN)-stimulated innate immune responses. Dephosphorylates the OPG144 protein. This chain is Dual specificity protein phosphatase OPG106 (OPG106), found in Homo sapiens (Human).